The following is a 409-amino-acid chain: Argininosuccinate synthase (409 aa).

10-18 (AYSGGLDTS) serves as a coordination point for ATP. Tyrosine 87 contacts L-citrulline. Residue glycine 117 participates in ATP binding. L-aspartate-binding residues include threonine 119, asparagine 123, and aspartate 124. Asparagine 123 provides a ligand contact to L-citrulline. Arginine 127, serine 175, serine 184, glutamate 260, and tyrosine 272 together coordinate L-citrulline.

This sequence belongs to the argininosuccinate synthase family. Type 1 subfamily. As to quaternary structure, homotetramer.

It localises to the cytoplasm. It catalyses the reaction L-citrulline + L-aspartate + ATP = 2-(N(omega)-L-arginino)succinate + AMP + diphosphate + H(+). It functions in the pathway amino-acid biosynthesis; L-arginine biosynthesis; L-arginine from L-ornithine and carbamoyl phosphate: step 2/3. The polypeptide is Argininosuccinate synthase (Rubrobacter xylanophilus (strain DSM 9941 / JCM 11954 / NBRC 16129 / PRD-1)).